Consider the following 226-residue polypeptide: PKHD-type hydroxylase PLES_48951 (226 aa).

The Fe2OG dioxygenase domain occupies 78 to 178 (KVFPPLFNCY…RYASFFWTQS (101 aa)). Residues histidine 96, aspartate 98, and histidine 159 each contribute to the Fe cation site. Residue arginine 169 participates in 2-oxoglutarate binding.

The cofactor is Fe(2+). Requires L-ascorbate as cofactor.

The polypeptide is PKHD-type hydroxylase PLES_48951 (Pseudomonas aeruginosa (strain LESB58)).